We begin with the raw amino-acid sequence, 208 residues long: GTP cyclohydrolase 1 (208 aa).

3 residues coordinate Zn(2+): Cys-89, His-92, and Cys-163.

It belongs to the GTP cyclohydrolase I family. As to quaternary structure, homomer.

The enzyme catalyses GTP + H2O = 7,8-dihydroneopterin 3'-triphosphate + formate + H(+). It participates in cofactor biosynthesis; 7,8-dihydroneopterin triphosphate biosynthesis; 7,8-dihydroneopterin triphosphate from GTP: step 1/1. This chain is GTP cyclohydrolase 1, found in Saccharolobus islandicus (strain L.S.2.15 / Lassen #1) (Sulfolobus islandicus).